Reading from the N-terminus, the 409-residue chain is Killer cell lectin-like receptor subfamily G member 2 (409 aa).

The disordered stretch occupies residues Met1 to Ala120. The span at Pro41–Ala53 shows a compositional bias: low complexity. The segment covering Ser72 to Pro81 has biased composition (pro residues). Positions Pro104 to Ala120 are enriched in low complexity. Ser158 carries the post-translational modification Phosphoserine. The disordered stretch occupies residues Thr193 to Pro216. Low complexity predominate over residues Arg202–Pro216. The chain crosses the membrane as a helical span at residues Trp263–Ala283. A C-type lectin domain is found at Ser300–Ala405. 2 disulfide bridges follow: Cys321/Cys404 and Cys383/Cys396.

It localises to the membrane. The protein is Killer cell lectin-like receptor subfamily G member 2 (KLRG2) of Homo sapiens (Human).